The chain runs to 220 residues: MTSVVYHAFSQKEAKELDVQHSGAQRAEAFVRAFLKRSMPRMSQQALEDHLQRKAVVLEYFTHRKQKEKRKKSKGLSAKQRRELRLFDIKPEQQRYSLFLPLHELWKQYIRDLCNGLKPDTQPQMIQAKLLKADLHGAIVSVTKSKCPSYVGVTGILLQETKHVFKIITKEDRLKVIPKLNCVFTVEIDGFISYIYGSKFQLRSSERSAKKFKAKGTIDL.

Ser-10 carries the phosphoserine modification.

The protein belongs to the eukaryotic/archaeal RNase P protein component 1 family. In terms of assembly, component of nuclear RNase P and RNase MRP ribonucleoproteins. RNase P consists of a catalytic RNA moiety and 10 different protein chains; POP1, POP4, POP5, POP7, RPP14, RPP21, RPP25, RPP30, RPP38 and RPP40. Within the RNase P complex, POP1, POP7 and RPP25 form the 'finger' subcomplex, POP5, RPP14, RPP40 and homodimeric RPP30 form the 'palm' subcomplex, and RPP21, POP4 and RPP38 form the 'wrist' subcomplex. All subunits of the RNase P complex interact with the catalytic RNA. Several subunits of RNase P are also part of the RNase MRP complex. RNase MRP consists of a catalytic RNA moiety and about 8 protein subunits; POP1, POP7, RPP25, RPP30, RPP38, RPP40 and possibly also POP4 and POP5.

It is found in the nucleus. The protein localises to the nucleolus. Functionally, component of ribonuclease P, a ribonucleoprotein complex that generates mature tRNA molecules by cleaving their 5'-ends. The sequence is that of Ribonuclease P protein subunit p29 (POP4) from Bos taurus (Bovine).